Reading from the N-terminus, the 54-residue chain is Insulin (54 aa).

Cystine bridges form between C7–C39, C19–C52, and C38–C43.

The protein belongs to the insulin family. Heterodimer of a B chain and an A chain linked by two disulfide bonds.

It localises to the secreted. Its function is as follows. Insulin decreases blood glucose concentration. It increases cell permeability to monosaccharides, amino acids and fatty acids. It accelerates glycolysis, the pentose phosphate cycle, and glycogen synthesis in liver. The chain is Insulin (ins) from Squalus acanthias (Spiny dogfish).